Here is a 474-residue protein sequence, read N- to C-terminus: MDVADSTSETPPVFDHDNLALAAQTNLLQFYLTHLASTLVPPMKLDMRDSMTPSFSQTESPNSETDDSTSAANKVLFSILGTPTTDSTSNAVSKSSSKLCSVCGDKSTGLHYGAATCEGCKGFFKRSVQNKKVYHCSQDNCCEIDKQNRNRCQSCRFRKCISKGMLTEAVREDRMPGGRNGNSIYSNYKQRRSIIRKTKDYVEEQERRPFQSLPSGKKLIKELVEMDCLDRLINLKGLRINPSANCDIAPACKRLTRIGDEIVEQLVEWTKTLPFFDELPVEAHTHLLTQRWAELVLLSAGYYACSVFTPDSPDTTEMIDETDEISFTNPQVNLRLLQNRLSLVLGKEIPLEHVAKEAGPLVTRFTTLLHSFSNLKVSPEAYVCIKAITLLHLSADSTLDRSIIDKVNTLQDHFVKTLQIHLHQPGEDAQTTSLAQILDWLPDLRNASSVLLHSKMFYVPFLLCKNPRRLVFDE.

Residues 50–69 (SMTPSFSQTESPNSETDDST) form a disordered region. Positions 51–69 (MTPSFSQTESPNSETDDST) are enriched in polar residues. The nuclear receptor DNA-binding region spans 97–172 (SKLCSVCGDK…KGMLTEAVRE (76 aa)). NR C4-type zinc fingers lie at residues 100–120 (CSVCGDKSTGLHYGAATCEGC) and 136–155 (CSQDNCCEIDKQNRNRCQSC). The NR LBD domain maps to 215-474 (SGKKLIKELV…KNPRRLVFDE (260 aa)).

The protein belongs to the nuclear hormone receptor family.

The protein resides in the nucleus. In terms of biological role, orphan nuclear receptor. The sequence is that of Nuclear hormone receptor family member nhr-91 (nhr-91) from Caenorhabditis elegans.